A 349-amino-acid chain; its full sequence is MISDRKLEHLILCASCDVEYRKKTGFEDIEIVHRAIPEINKEKIDISLDFLGRELSSPVMISAITGGHPASMKINRELARAAEKLGIALGLGSQRAGVEHPELEGTYTIAREEAPSAMLIGNIGSSHIEYAERAVEMIDADALAVHLNPLQESIQPGGDVDSSGALESISAIVESVDVPVMVKETGAGICSEDAIELESCGVSAIDVAGAGGTSWAAVETYRADDRYLGELFWDWGIPTAASTVEVVESVSIPVIASGGIRSGIDAAKAISLGAEMVGIALPVLEAAGHGYREVIKVIEGFNEALRTAMYLAGAETLDDLKKSPVIITGHTGEWLNQRGFETKKYARRS.

R5 to K6 lines the substrate pocket. FMN is bound by residues S62, A63 to T65, S93, and N122. S93 to R95 contacts substrate. Q151 contacts substrate. E152 contacts Mg(2+). Residues K183, T213, G259 to R261, and A280 to L281 contribute to the FMN site.

Belongs to the IPP isomerase type 2 family. As to quaternary structure, homooctamer. Dimer of tetramers. Requires FMN as cofactor. The cofactor is NADPH. It depends on Mg(2+) as a cofactor.

The protein resides in the cytoplasm. It catalyses the reaction isopentenyl diphosphate = dimethylallyl diphosphate. In terms of biological role, involved in the biosynthesis of isoprenoids. Catalyzes the 1,3-allylic rearrangement of the homoallylic substrate isopentenyl (IPP) to its allylic isomer, dimethylallyl diphosphate (DMAPP). The polypeptide is Isopentenyl-diphosphate delta-isomerase (Methanothermobacter thermautotrophicus (strain ATCC 29096 / DSM 1053 / JCM 10044 / NBRC 100330 / Delta H) (Methanobacterium thermoautotrophicum)).